The following is a 277-amino-acid chain: Purine nucleoside phosphorylase 2 (277 aa).

Phosphate is bound by residues H65, 85 to 87 (RGH), and A117. E197 lines the a purine D-ribonucleoside pocket. Position 216 (S216) interacts with phosphate. Residue N239 coordinates a purine D-ribonucleoside.

It belongs to the PNP/MTAP phosphorylase family. As to quaternary structure, hexamer. Dimer of trimers.

The catalysed reaction is a purine D-ribonucleoside + phosphate = a purine nucleobase + alpha-D-ribose 1-phosphate. It participates in purine metabolism; xanthosine degradation. Its pathway is purine metabolism; purine nucleoside salvage. With respect to regulation, rapidly inactivated by p-chloromercuriphenylsulfonic acid (p-CMB). Dithiothreitol incubation restores the activity. The purine nucleoside phosphorylases catalyze the phosphorolytic breakdown of the N-glycosidic bond in the beta-(deoxy)ribonucleoside molecules, with the formation of the corresponding free purine bases and pentose-1-phosphate. This protein can degrade all purine nucleosides including xanthosine, inosine and guanosine, but cannot cleave adenosine, deoxyadenosine or hypoxanthine arabinoside. Has a preference for the neutral over the monoanionic form of xanthosine. This Escherichia coli (strain K12) protein is Purine nucleoside phosphorylase 2 (xapA).